We begin with the raw amino-acid sequence, 868 residues long: Muscle, skeletal receptor tyrosine-protein kinase (868 aa).

An N-terminal signal peptide occupies residues Met1 to Thr21. Topologically, residues Glu22 to Thr494 are extracellular. 3 Ig-like domains span residues Pro28–Gln116, Pro121–Lys205, and Ala212–Ser302. 3 cysteine pairs are disulfide-bonded: Cys49–Cys99, Cys98–Cys112, and Cys142–Cys190. An N-linked (GlcNAc...) asparagine glycan is attached at Asn222. 6 disulfide bridges follow: Cys233–Cys282, Cys317–Cys382, Cys325–Cys375, Cys366–Cys406, Cys394–Cys447, and Cys398–Cys434. Residues Asp312 to Leu450 form the FZ domain. N-linked (GlcNAc...) asparagine glycosylation is present at Asn338. An N-linked (GlcNAc...) asparagine glycan is attached at Asn459. The helical transmembrane segment at Val495–Tyr515 threads the bilayer. At Cys516–Val868 the chain is on the cytoplasmic side. Tyr553 bears the Phosphotyrosine; by autocatalysis mark. Residues Ile574 to Leu855 enclose the Protein kinase domain. Residues Ile580–Val588 and Lys608 each bind ATP. A phosphoserine; by CK2 mark is found at Ser680 and Ser697. Asp724 serves as the catalytic Proton acceptor. Phosphotyrosine; by autocatalysis is present on Tyr754.

This sequence belongs to the protein kinase superfamily. Tyr protein kinase family. In terms of assembly, monomer. Homodimer. Interacts with LRP4; the heterodimer forms an AGRIN receptor complex that binds AGRIN resulting in activation of MUSK. Forms a heterotetramer composed of 2 DOK7 and 2 MUSK molecules which facilitates MUSK trans-autophosphorylation on tyrosine residue and activation. Interacts (via cytoplasmic part) with DOK7 (via IRS-type PTB domain); requires MUSK phosphorylation. Interacts with DVL1 (via DEP domain); the interaction is direct and mediates the formation of a DVL1, MUSK and PAK1 ternary complex involved in AChR clustering. Interacts with PDZRN3; this interaction is enhanced by agrin. Interacts with FNTA; the interaction is direct and mediates AGRIN-induced phosphorylation and activation of FNTA. Interacts with CSNK2B; mediates regulation by CK2. Interacts (via the cytoplasmic domain) with DNAJA3. Interacts with NSF; may regulate MUSK endocytosis and activity. Interacts with CAV3; may regulate MUSK signaling. Interacts with RNF31. Mg(2+) serves as cofactor. Ubiquitinated by PDZRN3. Ubiquitination promotes endocytosis and lysosomal degradation. In terms of processing, phosphorylated. Phosphorylation is induced by AGRIN. Autophosphorylated. Autophosphorylation at Tyr-553 is required for interaction with DOK7 which in turn stimulates the phosphorylation and the activation of MUSK. Post-translationally, neddylated. Expressed preferentially in skeletal muscle.

Its subcellular location is the postsynaptic cell membrane. The enzyme catalyses L-tyrosyl-[protein] + ATP = O-phospho-L-tyrosyl-[protein] + ADP + H(+). Its activity is regulated as follows. Positively regulated by CK2. Its function is as follows. Receptor tyrosine kinase which plays a central role in the formation and the maintenance of the neuromuscular junction (NMJ), the synapse between the motor neuron and the skeletal muscle. Recruitment of AGRIN by LRP4 to the MUSK signaling complex induces phosphorylation and activation of MUSK, the kinase of the complex. The activation of MUSK in myotubes regulates the formation of NMJs through the regulation of different processes including the specific expression of genes in subsynaptic nuclei, the reorganization of the actin cytoskeleton and the clustering of the acetylcholine receptors (AChR) in the postsynaptic membrane. May regulate AChR phosphorylation and clustering through activation of ABL1 and Src family kinases which in turn regulate MUSK. DVL1 and PAK1 that form a ternary complex with MUSK are also important for MUSK-dependent regulation of AChR clustering. May positively regulate Rho family GTPases through FNTA. Mediates the phosphorylation of FNTA which promotes prenylation, recruitment to membranes and activation of RAC1 a regulator of the actin cytoskeleton and of gene expression. Other effectors of the MUSK signaling include DNAJA3 which functions downstream of MUSK. May also play a role within the central nervous system by mediating cholinergic responses, synaptic plasticity and memory formation. This Mus musculus (Mouse) protein is Muscle, skeletal receptor tyrosine-protein kinase (Musk).